An 85-amino-acid polypeptide reads, in one-letter code: Alpha-toxin Amm8 (85 aa).

Positions 1 to 19 are cleaved as a signal peptide; the sequence is MNYLVMISLALLFMTGVES. The region spanning 21–83 is the LCN-type CS-alpha/beta domain; sequence KDGYIVNDIN…VRTKGPGRCN (63 aa). 4 cysteine pairs are disulfide-bonded: Cys31–Cys82, Cys35–Cys55, Cys41–Cys65, and Cys45–Cys67. Position 85 (Arg85) is a propeptide, removed by a carboxypeptidase.

Belongs to the long (4 C-C) scorpion toxin superfamily. Sodium channel inhibitor family. Alpha subfamily. As to expression, expressed by the venom gland.

Its subcellular location is the secreted. Its function is as follows. Alpha toxins bind voltage-independently at site-3 of sodium channels (Nav) and inhibit the inactivation of the activated channels, thereby blocking neuronal transmission. The toxin principally slows the inactivation process of TTX-sensitive sodium channels. It discriminates neuronal versus muscular sodium channel, as it is more potent on rat brain Nav1.2/SCN2A (EC(50)=29 nM) than on rat skeletal muscle Nav1.4/SCN4A (EC(50)=416 nM). It also shows a weak activity on Nav1.7/SCN9A (EC(50)=1.76 uM). In vivo, the toxin produces pain hypersensibility to mechanical and thermal stimuli. It also exhibits potent analgesic activity (when injected intraperitoneally), increasing hot plate and tail flick withdrawal latencies in a dose-dependent fashion. This paradoxical analgesic action, is significantly suppressed by opioid receptor antagonists, suggesting a pain-induced analgesia mechanism that involves an endogenous opioid system. This led to hypothesis that pain relief induced by peripheral administration of Amm VIII may result from sensitization of primary afferent neurons and subsequent activation of an opioid-dependent noxious inhibitory control. The protein is Alpha-toxin Amm8 of Androctonus mauritanicus mauritanicus (Scorpion).